Consider the following 82-residue polypeptide: uncharacterized protein (82 aa).

This sequence belongs to the chlamydial CPn_0710/CT_666/TC_0037 family.

This is an uncharacterized protein from Chlamydia muridarum (strain MoPn / Nigg).